The primary structure comprises 454 residues: Glutamyl-tRNA reductase (454 aa).

Residues T49–R52, S109, E114–Q116, and Q120 each bind substrate. C50 serves as the catalytic Nucleophile. G189 to S194 is an NADP(+) binding site. A disordered region spans residues N434–D454.

Belongs to the glutamyl-tRNA reductase family. Homodimer.

It catalyses the reaction (S)-4-amino-5-oxopentanoate + tRNA(Glu) + NADP(+) = L-glutamyl-tRNA(Glu) + NADPH + H(+). It functions in the pathway porphyrin-containing compound metabolism; protoporphyrin-IX biosynthesis; 5-aminolevulinate from L-glutamyl-tRNA(Glu): step 1/2. Functionally, catalyzes the NADPH-dependent reduction of glutamyl-tRNA(Glu) to glutamate 1-semialdehyde (GSA). This is Glutamyl-tRNA reductase from Brevibacillus brevis (strain 47 / JCM 6285 / NBRC 100599).